An 860-amino-acid polypeptide reads, in one-letter code: Leucine--tRNA ligase (860 aa).

The short motif at 42–52 is the 'HIGH' region element; that stretch reads PYPSGRLHMGH. Positions 619-623 match the 'KMSKS' region motif; the sequence is KMSKS. Lysine 622 provides a ligand contact to ATP.

It belongs to the class-I aminoacyl-tRNA synthetase family.

It is found in the cytoplasm. It catalyses the reaction tRNA(Leu) + L-leucine + ATP = L-leucyl-tRNA(Leu) + AMP + diphosphate. This is Leucine--tRNA ligase from Escherichia coli O157:H7.